Consider the following 173-residue polypeptide: Adenine phosphoribosyltransferase (173 aa).

Belongs to the purine/pyrimidine phosphoribosyltransferase family. As to quaternary structure, homodimer.

The protein resides in the cytoplasm. It carries out the reaction AMP + diphosphate = 5-phospho-alpha-D-ribose 1-diphosphate + adenine. Its pathway is purine metabolism; AMP biosynthesis via salvage pathway; AMP from adenine: step 1/1. Its function is as follows. Catalyzes a salvage reaction resulting in the formation of AMP, that is energically less costly than de novo synthesis. The polypeptide is Adenine phosphoribosyltransferase (Desulfitobacterium hafniense (strain Y51)).